The following is a 557-amino-acid chain: Formate--tetrahydrofolate ligase 2 (557 aa).

66–73 lines the ATP pocket; sequence TPAGEGKT.

It belongs to the formate--tetrahydrofolate ligase family.

It catalyses the reaction (6S)-5,6,7,8-tetrahydrofolate + formate + ATP = (6R)-10-formyltetrahydrofolate + ADP + phosphate. Its pathway is one-carbon metabolism; tetrahydrofolate interconversion. This is Formate--tetrahydrofolate ligase 2 from Streptococcus pyogenes serotype M3 (strain ATCC BAA-595 / MGAS315).